The primary structure comprises 400 residues: MGVLMSKRQTVEQVQKVSLAVSAFKDGLRDRPSIRRTGELPGSRRGTVEGSVQEVQEEKEAEAGTSVVQEESSAGRAAWERLRDGRGVEPEEFDRTGRFTPPAFIRPTRKLDDDKPPEICLEPREPVVNDEMCDVCEVWTAESLFPCRVCTRVFHDGCLRRMGYIQGDSAAEVMEMAHTETGWSCHYCDNINLLLTEEEMYSLTETFQRCKVIPDCSLTLEDFLRYRHQAAKRGDRDRALSEEQEEQAARQFAALDPEHRGYIEWSDFLSHESLLLLQQLRPQNSLLRLLTVKERERARATFLARGSGSTISEAECRRAQHSWFCKRFPEAPSCSVSISHVGPIADSSPASSSSKSQDKTLLPTEQESRFVDWPTFLQENVLYILAARPNSAAIHLKPPG.

A lipid anchor (N-myristoyl glycine) is attached at Gly-2. Residues 30–108 (DRPSIRRTGE…FTPPAFIRPT (79 aa)) form a disordered region. Position 36 is an omega-N-methylarginine (Arg-36). Position 43 is a phosphoserine (Ser-43). The residue at position 47 (Thr-47) is a Phosphothreonine. Residue Ser-51 is modified to Phosphoserine. Over residues 78–97 (AWERLRDGRGVEPEEFDRTG) the composition is skewed to basic and acidic residues. The segment at 129–190 (NDEMCDVCEV…TGWSCHYCDN (62 aa)) adopts a PHD-type zinc-finger fold.

This Pongo abelii (Sumatran orangutan) protein is PHD finger protein 24.